Here is a 140-residue protein sequence, read N- to C-terminus: Peptidyl-prolyl cis-trans isomerase FKBP2 (140 aa).

A signal peptide spans 1-22; the sequence is MRLSWILTILSICLSALAAATG. The PPIase FKBP-type domain occupies 47-135; it reads GDVLHMHYTG…VFEVELLKIE (89 aa). The Prevents secretion from ER motif lies at 137-140; it reads RSEL.

The protein belongs to the FKBP-type PPIase family. FKBP2 subfamily. In terms of assembly, interacts with ARFGEF1/BIG1 and the C-terminal of EPB41L2.

Its subcellular location is the endoplasmic reticulum membrane. It catalyses the reaction [protein]-peptidylproline (omega=180) = [protein]-peptidylproline (omega=0). Inhibited by both FK506 and rapamycin. PPIases accelerate the folding of proteins. It catalyzes the cis-trans isomerization of proline imidic peptide bonds in oligopeptides. The polypeptide is Peptidyl-prolyl cis-trans isomerase FKBP2 (Fkbp2) (Mus musculus (Mouse)).